We begin with the raw amino-acid sequence, 124 residues long: Glycine cleavage system H protein (124 aa).

Residues 19–101 (VATVGITNHA…EGEGWLFKME (83 aa)) enclose the Lipoyl-binding domain. The residue at position 60 (Lys60) is an N6-lipoyllysine.

This sequence belongs to the GcvH family. As to quaternary structure, the glycine cleavage system is composed of four proteins: P, T, L and H. It depends on (R)-lipoate as a cofactor.

Its function is as follows. The glycine cleavage system catalyzes the degradation of glycine. The H protein shuttles the methylamine group of glycine from the P protein to the T protein. This is Glycine cleavage system H protein from Thermotoga maritima (strain ATCC 43589 / DSM 3109 / JCM 10099 / NBRC 100826 / MSB8).